Here is a 520-residue protein sequence, read N- to C-terminus: Acetyltransferase MAT1 (520 aa).

Catalysis depends on proton acceptor residues His183 and Asp456.

Belongs to the plant acyltransferase family.

The protein operates within secondary metabolite biosynthesis. Its function is as follows. Acyl-CoA-dependent acyltransferase; part of the gene cluster that mediates the biosynthesis of mannosylerythritol lipids (MELs), surface-active substances that enhance the availability of water-insoluble substrates. Depending on the number of acetyl groups, mannosylerythritol lipids can be differentiated into MEL A (fully acetylated), MEL B and MEL C (monoacetylated at R-6 and R-4, respectively), and the fully deacetylated MEL D. The first step in the pathway is the generation of mannosylerythritol by the glycosyltransferase EMT1 which catalyzes the transfer of GDP-mannose to the C-4 atom of meso-erythritol. This reaction has to be stereospecific, since only mannosyl-D-erythritol is generated. The produced disaccharide is subsequently acylated with fatty acids of various lengths by the acyltransferases MAC1 and MAC2 at positions C-2 and C-3, repectively. The existence of MEL derivatives which carry an acetyl group at C-2 implies that at least MAC1 also accepts acetyl-CoA as a donor. The final step of MEL biosynthesis is the acetylation of the fully acylated mannosylerythritol lipids catalyzed by the acetyl-CoA-dependent acetyltransferase MAT1. MAT1 displays a relaxed regioselectivity and is able to transfer acetylgroups to both positions C-4 and C-6 of the mannosyl moiety. This chain is Acetyltransferase MAT1, found in Pseudozyma antarctica (strain T-34) (Yeast).